The chain runs to 827 residues: WD repeat-containing protein 27 (827 aa).

14 WD repeats span residues 3 to 57, 62 to 101, 112 to 151, 155 to 194, 201 to 237, 292 to 337, 344 to 387, 502 to 542, 546 to 584, 590 to 629, 646 to 687, 698 to 740, 746 to 784, and 788 to 826; these read NPQD…IWNT, HQLL…MWNL, LVPR…MLDI, AVRA…VWDH, YSSS…IFSL, FPVL…LANL, YYKD…VLEI, KPGP…VFDA, GTPA…MWSA, ALLL…RYHI, KLIC…VFDL, EAHS…LWDL, ERHF…VYEM, and TFSH…LFLA.

This is WD repeat-containing protein 27 (WDR27) from Homo sapiens (Human).